Here is a 407-residue protein sequence, read N- to C-terminus: Peptidase T (407 aa).

His-78 is a binding site for Zn(2+). The active site involves Asp-80. Asp-139 is a binding site for Zn(2+). The active-site Proton acceptor is Glu-173. Positions 174, 196, and 378 each coordinate Zn(2+).

Belongs to the peptidase M20B family. Zn(2+) serves as cofactor.

It is found in the cytoplasm. It carries out the reaction Release of the N-terminal residue from a tripeptide.. Functionally, cleaves the N-terminal amino acid of tripeptides. The chain is Peptidase T from Macrococcus caseolyticus (strain JCSC5402) (Macrococcoides caseolyticum).